Reading from the N-terminus, the 562-residue chain is DNA ligase (562 aa).

Position 250 (Glu250) interacts with ATP. Lys252 acts as the N6-AMP-lysine intermediate in catalysis. 6 residues coordinate ATP: Arg257, Arg272, Glu302, Phe342, Arg417, and Lys423.

This sequence belongs to the ATP-dependent DNA ligase family. Mg(2+) is required as a cofactor. The cofactor is Zn(2+).

It catalyses the reaction ATP + (deoxyribonucleotide)n-3'-hydroxyl + 5'-phospho-(deoxyribonucleotide)m = (deoxyribonucleotide)n+m + AMP + diphosphate.. The catalysed reaction is NAD(+) + (deoxyribonucleotide)n-3'-hydroxyl + 5'-phospho-(deoxyribonucleotide)m = (deoxyribonucleotide)n+m + AMP + beta-nicotinamide D-nucleotide.. DNA ligase that seals nicks in double-stranded DNA during DNA replication, DNA recombination and DNA repair. Can use both ATP and NAD(+), but NAD(+) may be a preferred nucleotide cofactor. The sequence is that of DNA ligase from Thermococcus onnurineus (strain NA1).